A 579-amino-acid polypeptide reads, in one-letter code: Glutamine--tRNA ligase (579 aa).

A 'HIGH' region motif is present at residues 41-51; it reads PEPNGYLHIGH. ATP is bound by residues 42-44 and 48-54; these read EPN and HIGHAKA. 2 residues coordinate L-glutamine: aspartate 74 and tyrosine 218. ATP is bound by residues threonine 237, 285–286, and 293–295; these read RL and MSK. The short motif at 292 to 296 is the 'KMSKS' region element; it reads VMSKR.

It belongs to the class-I aminoacyl-tRNA synthetase family. In terms of assembly, monomer.

Its subcellular location is the cytoplasm. The catalysed reaction is tRNA(Gln) + L-glutamine + ATP = L-glutaminyl-tRNA(Gln) + AMP + diphosphate. The chain is Glutamine--tRNA ligase from Xanthomonas oryzae pv. oryzae (strain MAFF 311018).